Reading from the N-terminus, the 222-residue chain is Iron-sulfur cluster repair protein YtfE (222 aa).

This sequence belongs to the RIC family. YtfE subfamily. As to quaternary structure, homodimer.

The protein localises to the cytoplasm. Di-iron-containing protein involved in the repair of iron-sulfur clusters damaged by oxidative and nitrosative stress conditions. This is Iron-sulfur cluster repair protein YtfE from Musicola paradisiaca (strain Ech703) (Dickeya paradisiaca).